We begin with the raw amino-acid sequence, 316 residues long: Probable protein-L-isoaspartate O-methyltransferase (316 aa).

S-adenosyl-L-homocysteine is bound by residues 103 to 106 (ATIS), His111, Ser136, 157 to 158 (EH), 187 to 188 (DG), Thr263, and Gln268. The active site involves Ser106.

It belongs to the methyltransferase superfamily. L-isoaspartyl/D-aspartyl protein methyltransferase family.

The protein localises to the cytoplasm. It is found in the cytosol. The enzyme catalyses [protein]-L-isoaspartate + S-adenosyl-L-methionine = [protein]-L-isoaspartate alpha-methyl ester + S-adenosyl-L-homocysteine. Its function is as follows. Initiates the repair of damaged proteins by catalyzing methyl esterification of L-isoaspartyl and D-aspartyl residues produced by spontaneous isomerization and racemization of L-aspartyl and L-asparaginyl residues in aging peptides and proteins. The polypeptide is Probable protein-L-isoaspartate O-methyltransferase (pcmA) (Dictyostelium discoideum (Social amoeba)).